Reading from the N-terminus, the 460-residue chain is Serine--tRNA ligase (460 aa).

Position 255-257 (Thr255–Glu257) interacts with L-serine. Residues Arg286–Glu288 and Val302 contribute to the ATP site. L-serine is bound at residue Glu309. Glu373 to Ser376 is an ATP binding site. Thr409 is an L-serine binding site.

The protein belongs to the class-II aminoacyl-tRNA synthetase family. Type-1 seryl-tRNA synthetase subfamily. As to quaternary structure, homodimer. The tRNA molecule binds across the dimer.

The protein localises to the cytoplasm. It carries out the reaction tRNA(Ser) + L-serine + ATP = L-seryl-tRNA(Ser) + AMP + diphosphate + H(+). The enzyme catalyses tRNA(Sec) + L-serine + ATP = L-seryl-tRNA(Sec) + AMP + diphosphate + H(+). The protein operates within aminoacyl-tRNA biosynthesis; selenocysteinyl-tRNA(Sec) biosynthesis; L-seryl-tRNA(Sec) from L-serine and tRNA(Sec): step 1/1. Catalyzes the attachment of serine to tRNA(Ser). Is also able to aminoacylate tRNA(Sec) with serine, to form the misacylated tRNA L-seryl-tRNA(Sec), which will be further converted into selenocysteinyl-tRNA(Sec). This Aeropyrum pernix (strain ATCC 700893 / DSM 11879 / JCM 9820 / NBRC 100138 / K1) protein is Serine--tRNA ligase.